Reading from the N-terminus, the 1400-residue chain is DNA-directed RNA polymerase subunit beta' (1400 aa).

Zn(2+)-binding residues include Cys-71, Cys-73, Cys-86, and Cys-89. Asp-462, Asp-464, and Asp-466 together coordinate Mg(2+). Residues Cys-811, Cys-885, Cys-892, and Cys-895 each contribute to the Zn(2+) site.

The protein belongs to the RNA polymerase beta' chain family. As to quaternary structure, the RNAP catalytic core consists of 2 alpha, 1 beta, 1 beta' and 1 omega subunit. When a sigma factor is associated with the core the holoenzyme is formed, which can initiate transcription. Requires Mg(2+) as cofactor. It depends on Zn(2+) as a cofactor.

It carries out the reaction RNA(n) + a ribonucleoside 5'-triphosphate = RNA(n+1) + diphosphate. Functionally, DNA-dependent RNA polymerase catalyzes the transcription of DNA into RNA using the four ribonucleoside triphosphates as substrates. This is DNA-directed RNA polymerase subunit beta' from Brucella ovis (strain ATCC 25840 / 63/290 / NCTC 10512).